Reading from the N-terminus, the 300-residue chain is 4-hydroxy-tetrahydrodipicolinate synthase (300 aa).

Residue threonine 45 participates in pyruvate binding. The active-site Proton donor/acceptor is the tyrosine 140. The Schiff-base intermediate with substrate role is filled by lysine 169. Isoleucine 210 serves as a coordination point for pyruvate.

It belongs to the DapA family. As to quaternary structure, homotetramer; dimer of dimers.

It localises to the cytoplasm. It carries out the reaction L-aspartate 4-semialdehyde + pyruvate = (2S,4S)-4-hydroxy-2,3,4,5-tetrahydrodipicolinate + H2O + H(+). The protein operates within amino-acid biosynthesis; L-lysine biosynthesis via DAP pathway; (S)-tetrahydrodipicolinate from L-aspartate: step 3/4. Its function is as follows. Catalyzes the condensation of (S)-aspartate-beta-semialdehyde [(S)-ASA] and pyruvate to 4-hydroxy-tetrahydrodipicolinate (HTPA). In Helicobacter pylori (strain Shi470), this protein is 4-hydroxy-tetrahydrodipicolinate synthase.